A 160-amino-acid polypeptide reads, in one-letter code: Ureidoglycolate lyase (160 aa).

This sequence belongs to the ureidoglycolate lyase family. Homodimer. Ni(2+) serves as cofactor.

The catalysed reaction is (S)-ureidoglycolate = urea + glyoxylate. Its pathway is nitrogen metabolism; (S)-allantoin degradation. Its function is as follows. Catalyzes the catabolism of the allantoin degradation intermediate (S)-ureidoglycolate, generating urea and glyoxylate. Involved in the anaerobic utilization of allantoin as sole nitrogen source. Reinforces the induction of genes involved in the degradation of allantoin and glyoxylate by producing glyoxylate. This chain is Ureidoglycolate lyase, found in Shigella flexneri serotype 5b (strain 8401).